The primary structure comprises 394 residues: Phosphoglycerate kinase (394 aa).

Substrate is bound by residues 21-23 (DFN), Arg36, 59-62 (HLGR), Arg118, and Arg151. Ser183 carries the post-translational modification Phosphoserine. Positions 201 and 292 each coordinate ATP. Thr299 bears the Phosphothreonine mark. Residues Glu323 and 350-353 (GGDS) contribute to the ATP site.

Belongs to the phosphoglycerate kinase family. In terms of assembly, monomer.

Its subcellular location is the cytoplasm. The enzyme catalyses (2R)-3-phosphoglycerate + ATP = (2R)-3-phospho-glyceroyl phosphate + ADP. The protein operates within carbohydrate degradation; glycolysis; pyruvate from D-glyceraldehyde 3-phosphate: step 2/5. This is Phosphoglycerate kinase from Bacillus cereus (strain ZK / E33L).